The primary structure comprises 439 residues: 23S rRNA (uracil(1939)-C(5))-methyltransferase RlmD (439 aa).

The 60-residue stretch at 10-69 (KTQLNTRHQAVQVERLDHHGAGIAYLKKKPLFIDGALPGEEVVTQLVEEKSKFARGKLIK) folds into the TRAM domain. [4Fe-4S] cluster contacts are provided by cysteine 82, cysteine 88, cysteine 91, and cysteine 169. 6 residues coordinate S-adenosyl-L-methionine: glutamine 272, phenylalanine 301, asparagine 306, glutamate 322, asparagine 349, and aspartate 370. Catalysis depends on cysteine 396, which acts as the Nucleophile.

This sequence belongs to the class I-like SAM-binding methyltransferase superfamily. RNA M5U methyltransferase family. RlmD subfamily.

It carries out the reaction uridine(1939) in 23S rRNA + S-adenosyl-L-methionine = 5-methyluridine(1939) in 23S rRNA + S-adenosyl-L-homocysteine + H(+). In terms of biological role, catalyzes the formation of 5-methyl-uridine at position 1939 (m5U1939) in 23S rRNA. The protein is 23S rRNA (uracil(1939)-C(5))-methyltransferase RlmD of Vibrio parahaemolyticus serotype O3:K6 (strain RIMD 2210633).